Reading from the N-terminus, the 168-residue chain is MATAYHNLSDYDFNSVPNAENMRFGIVVSEWNNNITGPLLEGAISTLKKHGAKDKNILVQTVPGSFELTFGSAQMIKSGKVDAVIAIGCVVRGDTPHFDYVCAGTTQGIAQLNAEGDIPVIYGLITTNTMQQAEDRAGGRLGNKGDECAITAIKMLDFKEKLQKTQIF.

Residues Trp-31, 65-67 (SFE), and 89-91 (CVV) contribute to the 5-amino-6-(D-ribitylamino)uracil site. A (2S)-2-hydroxy-3-oxobutyl phosphate-binding site is contributed by 94–95 (DT). His-97 functions as the Proton donor in the catalytic mechanism. Residue Tyr-122 participates in 5-amino-6-(D-ribitylamino)uracil binding. Residue Arg-136 coordinates (2S)-2-hydroxy-3-oxobutyl phosphate.

It belongs to the DMRL synthase family.

It carries out the reaction (2S)-2-hydroxy-3-oxobutyl phosphate + 5-amino-6-(D-ribitylamino)uracil = 6,7-dimethyl-8-(1-D-ribityl)lumazine + phosphate + 2 H2O + H(+). Its pathway is cofactor biosynthesis; riboflavin biosynthesis; riboflavin from 2-hydroxy-3-oxobutyl phosphate and 5-amino-6-(D-ribitylamino)uracil: step 1/2. Its function is as follows. Catalyzes the formation of 6,7-dimethyl-8-ribityllumazine by condensation of 5-amino-6-(D-ribitylamino)uracil with 3,4-dihydroxy-2-butanone 4-phosphate. This is the penultimate step in the biosynthesis of riboflavin. In Phocaeicola vulgatus (strain ATCC 8482 / DSM 1447 / JCM 5826 / CCUG 4940 / NBRC 14291 / NCTC 11154) (Bacteroides vulgatus), this protein is 6,7-dimethyl-8-ribityllumazine synthase.